The following is a 117-amino-acid chain: Basic phospholipase A2 pseudexin B chain (117 aa).

Cystine bridges form between Cys-11–Cys-71, Cys-27–Cys-117, Cys-29–Cys-45, Cys-44–Cys-98, Cys-51–Cys-91, Cys-60–Cys-84, and Cys-78–Cys-89. The Ca(2+) site is built by Tyr-28, Gly-30, and Gly-32. His-48 is an active-site residue. Asp-49 contributes to the Ca(2+) binding site. The active site involves Asp-92.

Belongs to the phospholipase A2 family. Group I subfamily. D49 sub-subfamily. Requires Ca(2+) as cofactor. In terms of tissue distribution, expressed by the venom gland.

It localises to the secreted. It catalyses the reaction a 1,2-diacyl-sn-glycero-3-phosphocholine + H2O = a 1-acyl-sn-glycero-3-phosphocholine + a fatty acid + H(+). PLA2 catalyzes the calcium-dependent hydrolysis of the 2-acyl groups in 3-sn-phosphoglycerides. The chain is Basic phospholipase A2 pseudexin B chain from Pseudechis porphyriacus (Red-bellied black snake).